The chain runs to 617 residues: MKQSKMLIPTLREMPSDAQVISHALMVRAGYVRQVSAGIYAYLPLANRTIEKFKTIMRQEFEKIGAVEMLAPALLTADLWRESGRYETYGEDLYKLKNRDQSDFILGPTHEETFTTLVRDAVKSYKQLPLNLYQIQSKYRDEKRPRNGLLRTREFIMKDGYSFHKDYEDLDVTYEDYRKAYEAIFTRAGLDFKGIIGDGGAMGGKDSQEFMAVTPNRTDLNRWLVLDKTIPSIDDIPEDVLEEIKVELSAWLVSGEDTIAYSTESSYAANLEMATNEYKPSTKAATFEEVTKVETPNCKSIDEVAGFLSIDENQTIKTLLFIADEQPVVALLVGNDQVNDVKLKNYLAADFLEPASEEQAKEIFGAGFGSLGPVNLPDSVKIIADRKVQDLANAVSGANQDGYHFTGVNPERDFTAEYVDIREVKEGEISPDGKGTLKFARGIEIGHIFKLGTRYSDSMGANILDENGRSNPIVMGCYGIGVSRILSAVIEQHARLFVNKTPKGAYRFAWGINFPEELAPFDVHLITVNVKDQESQDLTEKIEADLMLKGYEVLTDDRNERVGSKFSDSDLIGLPIRVTVGKKASEGIVEVKIKASGDTIEVHADNLIETLEILTKK.

Belongs to the class-II aminoacyl-tRNA synthetase family. ProS type 1 subfamily. Homodimer.

The protein resides in the cytoplasm. The catalysed reaction is tRNA(Pro) + L-proline + ATP = L-prolyl-tRNA(Pro) + AMP + diphosphate. Catalyzes the attachment of proline to tRNA(Pro) in a two-step reaction: proline is first activated by ATP to form Pro-AMP and then transferred to the acceptor end of tRNA(Pro). As ProRS can inadvertently accommodate and process non-cognate amino acids such as alanine and cysteine, to avoid such errors it has two additional distinct editing activities against alanine. One activity is designated as 'pretransfer' editing and involves the tRNA(Pro)-independent hydrolysis of activated Ala-AMP. The other activity is designated 'posttransfer' editing and involves deacylation of mischarged Ala-tRNA(Pro). The misacylated Cys-tRNA(Pro) is not edited by ProRS. This Streptococcus agalactiae serotype V (strain ATCC BAA-611 / 2603 V/R) protein is Proline--tRNA ligase.